The chain runs to 477 residues: UDP-N-acetylmuramoylalanine--D-glutamate ligase (477 aa).

125–131 (GTNGKST) is an ATP binding site.

It belongs to the MurCDEF family.

The protein resides in the cytoplasm. It catalyses the reaction UDP-N-acetyl-alpha-D-muramoyl-L-alanine + D-glutamate + ATP = UDP-N-acetyl-alpha-D-muramoyl-L-alanyl-D-glutamate + ADP + phosphate + H(+). It functions in the pathway cell wall biogenesis; peptidoglycan biosynthesis. In terms of biological role, cell wall formation. Catalyzes the addition of glutamate to the nucleotide precursor UDP-N-acetylmuramoyl-L-alanine (UMA). This Rhodospirillum rubrum (strain ATCC 11170 / ATH 1.1.1 / DSM 467 / LMG 4362 / NCIMB 8255 / S1) protein is UDP-N-acetylmuramoylalanine--D-glutamate ligase.